Here is a 146-residue protein sequence, read N- to C-terminus: UPF0178 protein BCAH187_A3092 (146 aa).

The protein belongs to the UPF0178 family.

The protein is UPF0178 protein BCAH187_A3092 of Bacillus cereus (strain AH187).